Here is a 310-residue protein sequence, read N- to C-terminus: Ribonuclease Z (310 aa).

Positions 63, 65, 67, 68, 141, 212, and 270 each coordinate Zn(2+). Catalysis depends on Asp-67, which acts as the Proton acceptor.

It belongs to the RNase Z family. As to quaternary structure, homodimer. Requires Zn(2+) as cofactor.

The catalysed reaction is Endonucleolytic cleavage of RNA, removing extra 3' nucleotides from tRNA precursor, generating 3' termini of tRNAs. A 3'-hydroxy group is left at the tRNA terminus and a 5'-phosphoryl group is left at the trailer molecule.. Its function is as follows. Zinc phosphodiesterase, which displays some tRNA 3'-processing endonuclease activity. Probably involved in tRNA maturation, by removing a 3'-trailer from precursor tRNA. This is Ribonuclease Z from Limosilactobacillus fermentum (strain NBRC 3956 / LMG 18251) (Lactobacillus fermentum).